A 451-amino-acid chain; its full sequence is Glutamyl-tRNA(Gln) amidotransferase subunit D (451 aa).

The interval 78 to 97 (PREAPTPGEEEGSQEDFGQP) is disordered. The 334-residue stretch at 99 to 432 (PRVFFVGTGG…EEIQRLFTAN (334 aa)) folds into the Asparaginase/glutaminase domain. Residues Thr-109, Thr-187, Asp-188, and Lys-266 contribute to the active site.

Belongs to the asparaginase 1 family. GatD subfamily. Heterodimer of GatD and GatE.

It carries out the reaction L-glutamyl-tRNA(Gln) + L-glutamine + ATP + H2O = L-glutaminyl-tRNA(Gln) + L-glutamate + ADP + phosphate + H(+). Its function is as follows. Allows the formation of correctly charged Gln-tRNA(Gln) through the transamidation of misacylated Glu-tRNA(Gln) in organisms which lack glutaminyl-tRNA synthetase. The reaction takes place in the presence of glutamine and ATP through an activated gamma-phospho-Glu-tRNA(Gln). The GatDE system is specific for glutamate and does not act on aspartate. The polypeptide is Glutamyl-tRNA(Gln) amidotransferase subunit D (Thermofilum pendens (strain DSM 2475 / Hrk 5)).